A 297-amino-acid chain; its full sequence is UBX domain-containing protein 1 (297 aa).

The residue at position 2 (Ala-2) is an N-acetylalanine. A UBA domain is found at 2–42 (AELTALESLIEMGFPRGRAEKALALTGNQGIEAAMDWLMEH). The tract at residues 38 to 214 (WLMEHEDDPD…PPTKREYDQC (177 aa)) is disordered. The segment covering 42–52 (HEDDPDVDEPL) has biased composition (acidic residues). Positions 43-297 (EDDPDVDEPL…VLIVAKKCPS (255 aa)) are interaction with BRCA1. 2 stretches are compositionally biased toward basic and acidic residues: residues 86–122 (LTEEERQEQTKRMLELVAQKQREREEREEREALEREK) and 137–177 (KLQE…ERAK). Ser-199 carries the phosphoserine modification. At Ser-200 the chain carries Phosphoserine; by MAPK12. A phosphothreonine mark is found at Thr-207 and Thr-229. The region spanning 209-291 (REYDQCRIQV…GLVPSAVLIV (83 aa)) is the UBX domain. At Ser-270 the chain carries Phosphoserine.

As to quaternary structure, interacts with MAVS; this interaction prevents MAVS oligomerization and thus disrupts the RLR signaling pathway. Interacts with CUL1; this interaction inhibits CUL1-mediated degradation of NF-kappa-B inhibitors. Interacts with BIRC2/c-IAP1; this interaction prevents TNFalpha-stimulated RIP1 ubiquitination and subsequent NF-kappa-B activation. Component of a complex required to couple retrotranslocation, ubiquitination and deglycosylation composed of NGLY1, SAKS1, AMFR, VCP and RAD23B. Interacts with HOMER2. Interacts directly with VCP. Interacts with BRCA1 and BARD1; interaction takes place when BRCA1 is not autoubiquitinated but is strongly enhanced in the presence of autoubiquitinated BRCA1.

Its subcellular location is the cytoplasm. Functionally, ubiquitin-binding protein that plays a role in the modulation of innate immune response. Blocks both the RIG-I-like receptors (RLR) and NF-kappa-B pathways. Following viral infection, UBXN1 is induced and recruited to the RLR component MAVS. In turn, interferes with MAVS oligomerization, and disrupts the MAVS/TRAF3/TRAF6 signalosome. This function probably serves as a brake to prevent excessive RLR signaling. Interferes with the TNFalpha-triggered NF-kappa-B pathway by interacting with cellular inhibitors of apoptosis proteins (cIAPs) and thereby inhibiting their recruitment to TNFR1. Also prevents the activation of NF-kappa-B by associating with CUL1 and thus inhibiting NF-kappa-B inhibitor alpha/NFKBIA degradation that remains bound to NF-kappa-B. Interacts with the BRCA1-BARD1 heterodimer and regulates its activity. Specifically binds 'Lys-6'-linked polyubiquitin chains. Interaction with autoubiquitinated BRCA1 leads to the inhibition of the E3 ubiquitin-protein ligase activity of the BRCA1-BARD1 heterodimer. Component of a complex required to couple deglycosylation and proteasome-mediated degradation of misfolded proteins in the endoplasmic reticulum that are retrotranslocated in the cytosol. The chain is UBX domain-containing protein 1 (Ubxn1) from Mus musculus (Mouse).